The following is a 457-amino-acid chain: Protein unc-93 homolog A (457 aa).

A run of 5 helical transmembrane segments spans residues 8–28, 42–62, 65–85, 86–106, and 140–160; these read VLVV…LQSL, ALST…PLLI, LGCK…SVGN, FFAS…GAAP, and IFFL…SLVF. Asn-190 carries N-linked (GlcNAc...) asparagine glycosylation. 6 helical membrane passes run 202-222, 257-277, 291-311, 320-340, 344-364, and 395-415; these read TLLG…AAFL, LCLL…LSSE, FVGY…VLYG, AVLY…LLLW, ADHL…DAVW, and FVIA…YILL.

The protein belongs to the unc-93 family. Expressed in testis, small intestine, spleen, prostate and ovary.

Its subcellular location is the cell membrane. The protein is Protein unc-93 homolog A (UNC93A) of Homo sapiens (Human).